We begin with the raw amino-acid sequence, 518 residues long: 2-isopropylmalate synthase (518 aa).

A Pyruvate carboxyltransferase domain is found at 5–267 (VIIFDTTLRD…STNIKHKEIY (263 aa)). Mn(2+) is bound by residues Asp14, His202, His204, and Asn238. The regulatory domain stretch occupies residues 392 to 518 (SLSFFSVQSI…KLKTLKKVNN (127 aa)).

It belongs to the alpha-IPM synthase/homocitrate synthase family. LeuA type 1 subfamily. Homodimer. It depends on Mn(2+) as a cofactor.

The protein resides in the cytoplasm. It catalyses the reaction 3-methyl-2-oxobutanoate + acetyl-CoA + H2O = (2S)-2-isopropylmalate + CoA + H(+). It functions in the pathway amino-acid biosynthesis; L-leucine biosynthesis; L-leucine from 3-methyl-2-oxobutanoate: step 1/4. Catalyzes the condensation of the acetyl group of acetyl-CoA with 3-methyl-2-oxobutanoate (2-ketoisovalerate) to form 3-carboxy-3-hydroxy-4-methylpentanoate (2-isopropylmalate). The chain is 2-isopropylmalate synthase from Buchnera aphidicola subsp. Schizaphis graminum (strain Sg).